Here is a 149-residue protein sequence, read N- to C-terminus: Protein FAM72A (149 aa).

Belongs to the FAM72 family. In terms of assembly, interacts with UNG. In terms of tissue distribution, may be up-regulated in malignant colon cancers, compared to normal colon and colon adenomas. Expression is also elevated in other common cancer types, including breast, lung, uterus, and ovary.

Its subcellular location is the cytoplasm. The protein localises to the mitochondrion. In terms of biological role, may play a role in the regulation of cellular reactive oxygen species metabolism. May participate in cell growth regulation. The protein is Protein FAM72A (FAM72A) of Homo sapiens (Human).